The chain runs to 1122 residues: Desmoglein-2 (1122 aa).

A signal peptide spans 1–28 (MARSPGDRCALLLLVQLLAVVCLDFGNG). A propeptide spanning residues 29–54 (LHLEVFSPRNEGKPFPKHTHLVRQKR) is cleaved from the precursor. Cadherin domains follow at residues 55–164 (AWIT…EPVF), 165–277 (TQEV…IPVV), 278–398 (ENKM…SSVV), and 397–504 (VVSF…CPVL). The Extracellular segment spans residues 55–618 (AWITAPVALR…YDNYVGLGPA (564 aa)). N-linked (GlcNAc...) asparagine glycosylation is present at Asn-117. N-linked (GlcNAc...) asparagine glycosylation is found at Asn-314, Asn-467, and Asn-519. A helical transmembrane segment spans residues 619-639 (AIALMILALLLLLLVPLLLLI). Residues 640-1122 (CHCGGGAKGF…KHSTMQHSYS (483 aa)) lie on the Cytoplasmic side of the membrane. Phosphoserine occurs at positions 685, 706, 709, and 729. Phosphothreonine is present on Thr-808. Phosphoserine occurs at positions 810, 814, and 819. 6 Desmoglein repeat repeats span residues 885-916 (AYSSNTGFPAPKPLHEVHTEKVTQEIVTESSV), 917-945 (SSRQSQKVVPPPDPVASGNIIVTETSYAK), 946-971 (GSAVPPSTVLLAPRQPQSLIVTERVY), 972-995 (APTSTLVDQHYANEEKVLVTERVI), 996-1024 (QPNGGIPKPLEVTQHLKDAQYVMVRERES), and 1025-1055 (ILAPSSGVQPTLAMPSVAAGGQNVTVTERIL). Residues 913 to 932 (ESSVSSRQSQKVVPPPDPVA) form a disordered region. Residues 914-924 (SSVSSRQSQKV) show a composition bias toward low complexity. The segment at 1089 to 1122 (LPNLDLEESDRPNSTITTSSTRVTKHSTMQHSYS) is disordered. Positions 1100 to 1122 (PNSTITTSSTRVTKHSTMQHSYS) are enriched in polar residues. Residue Ser-1122 is modified to Phosphoserine.

Interacts with PKP2. Interacts with CTNNB1; the interaction promotes localization of CTNNB1 at cell junctions thus reducing its nuclear localization and subsequent transcription of CTNNB1/TCF-target genes. In terms of processing, palmitoylated by ZDHHC5 at the plasma membrane. Expressed in undifferentiated pluripotent stem cells, expression decreases during differentiation (at protein level). Expressed by embryonic stem cells, expression is reduced during differentiation (at protein level). Expressed at the apical-lateral cell membrane of kidney tubular epithelial cells (at protein level). Expressed in epidermis and heart (at protein level). Expressed in the brain, spleen, lung, liver skeletal muscle, kidney and testis.

It localises to the cell membrane. Its subcellular location is the cell junction. The protein resides in the desmosome. The protein localises to the cytoplasm. A component of desmosome cell-cell junctions which are required for positive regulation of cellular adhesion. Involved in the interaction of plaque proteins and intermediate filaments mediating cell-cell adhesion. Required for proliferation and viability of embryonic stem cells in the blastocyst, thereby crucial for progression of post-implantation embryonic development. Maintains pluripotency by regulating epithelial to mesenchymal transition/mesenchymal to epithelial transition (EMT/MET) via interacting with and sequestering CTNNB1 to sites of cell-cell contact, thereby reducing translocation of CTNNB1 to the nucleus and subsequent transcription of CTNNB1/TCF-target genes. Promotes pluripotency and the multi-lineage differentiation potential of hematopoietic stem cells. Plays a role in endothelial cell sprouting and elongation via mediating the junctional-association of cortical actin fibers and CDH5. Plays a role in limiting inflammatory infiltration and the apoptotic response to injury in kidney tubular epithelial cells, potentially via its role in maintaining cell-cell adhesion and the epithelial barrier. The chain is Desmoglein-2 (Dsg2) from Mus musculus (Mouse).